The chain runs to 59 residues: Large ribosomal subunit protein uL30 (59 aa).

Belongs to the universal ribosomal protein uL30 family. In terms of assembly, part of the 50S ribosomal subunit.

This chain is Large ribosomal subunit protein uL30, found in Aliivibrio salmonicida (strain LFI1238) (Vibrio salmonicida (strain LFI1238)).